The primary structure comprises 324 residues: Olfactory receptor 4K15 (324 aa).

The Extracellular segment spans residues 1-25 (MNETNHSRVTEFVLLGLSSSRELQP). N-linked (GlcNAc...) asparagine glycans are attached at residues N2 and N5. The chain crosses the membrane as a helical span at residues 26–49 (FLFLTFSLLYLAILLGNFLIILTV). Over 50-57 (TSDSRLHT) the chain is Cytoplasmic. The helical transmembrane segment at 58-79 (PMYFLLANLSFIDVCVASFATP) threads the bilayer. Residues 80-100 (KMIADFLVERKTISFDACLAQ) lie on the Extracellular side of the membrane. A disulfide bridge links C97 with C189. Residues 101 to 120 (IFFVHLFTGSEMVLLVSMAY) form a helical membrane-spanning segment. Residues 121–139 (DRYVAICKPLHYMTVMSRR) lie on the Cytoplasmic side of the membrane. Residues 140–158 (VCVVLVLISWFVGFIHTTS) traverse the membrane as a helical segment. The Extracellular segment spans residues 159–195 (QLAFTVNLPFCGPNKVDSFFCDLPLVTKLACIDTYVV). A helical membrane pass occupies residues 196–219 (SLLIVADSGFLSLSSFLLLVVSYT). At 220 to 235 (VILVTVRNRSSASMAK) the chain is on the cytoplasmic side. Residues 236-258 (ARSTLTAHITVVTLFFGPCIFIY) form a helical membrane-spanning segment. Over 259 to 269 (VWPFSSYSVDK) the chain is Extracellular. A helical transmembrane segment spans residues 270-289 (VLAVFYTIFTLILNPVIYTL). Topologically, residues 290–324 (RNKEVKAAMSKLKSRYLKPSQVSVVIRNVLFLETK) are cytoplasmic.

This sequence belongs to the G-protein coupled receptor 1 family.

The protein resides in the cell membrane. Odorant receptor. This chain is Olfactory receptor 4K15 (OR4K15), found in Homo sapiens (Human).